A 392-amino-acid chain; its full sequence is Galactokinase (392 aa).

33 to 36 (EHTD) contributes to the substrate binding site. ATP contacts are provided by residues serine 67 and 129-135 (GSGLSSS). 2 residues coordinate Mg(2+): serine 135 and glutamate 167. Aspartate 179 functions as the Proton acceptor in the catalytic mechanism. Tyrosine 229 provides a ligand contact to substrate.

It belongs to the GHMP kinase family. GalK subfamily.

It localises to the cytoplasm. It carries out the reaction alpha-D-galactose + ATP = alpha-D-galactose 1-phosphate + ADP + H(+). Its pathway is carbohydrate metabolism; galactose metabolism. Functionally, catalyzes the transfer of the gamma-phosphate of ATP to D-galactose to form alpha-D-galactose-1-phosphate (Gal-1-P). In Limosilactobacillus reuteri (strain DSM 20016) (Lactobacillus reuteri), this protein is Galactokinase.